The sequence spans 409 residues: Arginine deiminase (409 aa).

Residue Cys-399 is the Amidino-cysteine intermediate of the active site.

The protein belongs to the arginine deiminase family.

Its subcellular location is the cytoplasm. The catalysed reaction is L-arginine + H2O = L-citrulline + NH4(+). It functions in the pathway amino-acid degradation; L-arginine degradation via ADI pathway; carbamoyl phosphate from L-arginine: step 1/2. This chain is Arginine deiminase, found in Borrelia duttonii (strain Ly).